A 290-amino-acid chain; its full sequence is Agroclavine dehydrogenase (290 aa).

This sequence belongs to the fgaFS/easG family. In terms of assembly, monomer.

The catalysed reaction is agroclavine + NADP(+) = didehydroagroclavine + NADPH + H(+). Its pathway is alkaloid biosynthesis; ergot alkaloid biosynthesis. In terms of biological role, agroclavine dehydrogenase; part of the gene cluster that mediates the biosynthesis of fungal ergot alkaloid. DmaW catalyzes the first step of ergot alkaloid biosynthesis by condensing dimethylallyl diphosphate (DMAP) and tryptophan to form 4-dimethylallyl-L-tryptophan. The second step is catalyzed by the methyltransferase easF that methylates 4-dimethylallyl-L-tryptophan in the presence of S-adenosyl-L-methionine, resulting in the formation of 4-dimethylallyl-L-abrine. The catalase easC and the FAD-dependent oxidoreductase easE then transform 4-dimethylallyl-L-abrine to chanoclavine-I which is further oxidized by easD in the presence of NAD(+), resulting in the formation of chanoclavine-I aldehyde. Agroclavine dehydrogenase easG then mediates the conversion of chanoclavine-I aldehyde to agroclavine via a non-enzymatic adduct reaction: the substrate is an iminium intermediate that is formed spontaneously from chanoclavine-I aldehyde in the presence of glutathione. The presence of easA is not required to complete this reaction. Further conversion of agroclavine to paspalic acid is a two-step process involving oxidation of agroclavine to elymoclavine and of elymoclavine to paspalic acid, the second step being performed by the elymoclavine oxidase cloA. Paspalic acid is then further converted to D-lysergic acid. Ergopeptines are assembled from D-lysergic acid and three different amino acids by the D-lysergyl-peptide-synthetases composed each of a monomudular and a trimodular nonribosomal peptide synthetase subunit. LpsB and lpsC encode the monomodular subunits responsible for D-lysergic acid activation and incorporation into the ergopeptine backbone. LpsA1 and A2 subunits encode the trimodular nonribosomal peptide synthetase assembling the tripeptide portion of ergopeptines. LpsA1 is responsible for formation of the major ergopeptine, ergotamine, and lpsA2 for alpha-ergocryptine, the minor ergopeptine of the total alkaloid mixture elaborated by C.purpurea. D-lysergyl-tripeptides are assembled by the nonribosomal peptide synthetases and released as N-(D-lysergyl-aminoacyl)-lactams. Cyclolization of the D-lysergyl-tripeptides is performed by the Fe(2+)/2-ketoglutarate-dependent dioxygenase easH which introduces a hydroxyl group into N-(D-lysergyl-aminoacyl)-lactam at alpha-C of the aminoacyl residue followed by spontaneous condensation with the terminal lactam carbonyl group. This chain is Agroclavine dehydrogenase, found in Claviceps purpurea (Ergot fungus).